Reading from the N-terminus, the 1006-residue chain is Unconventional myosin-Id (1006 aa).

A2 is modified (N-acetylalanine). In terms of domain architecture, Myosin motor spans 9-695 (FGKADFVLMD…TLFTLEELRA (687 aa)). Position 102–109 (102–109 (GESGAGKT)) interacts with ATP. A Phosphoserine modification is found at S200. Residue Y536 is modified to Phosphotyrosine. The actin-binding stretch occupies residues 572–594 (MIALVDNLASKEPYYVRCIKPND). IQ domains follow at residues 699-719 (IRIVLFLQKVWRGTLARMRYK) and 721-741 (TKAALTIIRYYRHYKVKSYIQ). One can recognise a TH1 domain in the interval 812 to 1005 (GQRADLGLQR…RSGFILSVPG (194 aa)).

Belongs to the TRAFAC class myosin-kinesin ATPase superfamily. Myosin family. Interacts (via the two IQ motifs) with calmodulin. Binds an additional calmodulin chain via a third, C-terminal region. Interacts with F-actin.

The protein localises to the cytoplasm. The protein resides in the perikaryon. It is found in the cell projection. Its subcellular location is the dendrite. It localises to the early endosome. The protein localises to the cell cortex. Unconventional myosin that functions as actin-based motor protein with ATPase activity. Plays a role in endosomal protein trafficking, and especially in the transfer of cargo proteins from early to recycling endosomes. Required for normal planar cell polarity in ciliated tracheal cells, for normal rotational polarity of cilia, and for coordinated, unidirectional ciliary movement in the trachea. Required for normal, polarized cilia organization in brain ependymal epithelial cells. In Canis lupus familiaris (Dog), this protein is Unconventional myosin-Id (MYO1D).